The chain runs to 814 residues: Coiled-coil and C2 domain-containing protein 1-like (814 aa).

The span at 1–11 shows a compositional bias: basic and acidic residues; the sequence is MFAKRKPEPAK. Disordered stretches follow at residues 1-136 and 157-263; these read MFAK…TFLP and EANA…RSRQ. The segment covering 25–47 has biased composition (acidic residues); the sequence is IPDDFDPTSGYGDDDGGDSDLEA. Positions 73–85 are enriched in basic and acidic residues; sequence DLDKMIADSLRDV. Acidic residues-rich tracts occupy residues 86-100 and 110-130; these read SDDDDDENLENDSDL and LEEEPEAEEAAAEPAASEEEP. Residues 143–201 are DM14 1; the sequence is LGIIKQRLEIYKQAEANAKASGDSGKARRFGRGLKTLQDLHKQAAAGKTINVDDIPPEV. Residues 205–230 are compositionally biased toward low complexity; sequence PAGDPSPAADESPAPSTPVSQPTRVA. A compositionally biased stretch (pro residues) spans 231–254; it reads PAPPTPTSPPAATPPPAPATPPNP. DM14 stretches follow at residues 256–314 and 358–416; these read VAQM…PPPP and LEAL…PVPP. Residues 351–378 are a coiled coil; it reads AAAAESMLEALQRRLEKYKSVEAAAKAE. Positions 414–425 are enriched in pro residues; sequence VPPGFGPLPSTE. Positions 414–486 are disordered; sequence VPPGFGPLPS…LTTRVTGNHQ (73 aa). Over residues 426-462 the composition is skewed to low complexity; the sequence is PAPAATPSLPTSPTSPPATASTSAGGTPSGSSATTPT. Residues 475–486 show a composition bias toward polar residues; sequence TELTTRVTGNHQ. The interval 495-553 is DM14 4; it reads MKLLLERQKEFKVAAIEAKKAGEIDQAKEYLKIYKGFDSLLNAASSGLPVDLSTLPVPP. The 140-residue stretch at 633 to 772 folds into the C2 domain; it reads RKGQPLPKFH…ETKCDIHDTY (140 aa).

It belongs to the CC2D1 family. Interacts (via DM14 domains 1 and 3) with shrb; the interaction is direct and blocks access to the surface involved in shrb polymerization. This interaction may be required for the ESCRT-III complex role in multivesicular body formation.

The protein localises to the cytoplasm. Its subcellular location is the cytosol. It localises to the apicolateral cell membrane. It is found in the cell cortex. The protein resides in the endosome. Phosphatidyl inositol monophosphate binding protein involved in endosomal protein sorting through regulation of the endosomal sorting required for transport (ESCRT) pathway. Required for full activity of the ESCRT-III complex core component shrb/shrub, probably by preventing its inappropriate polymerisation. Required, but not essential, for the efficient generation of intraluminal vesicles (ILVs) in multivesicular bodies (MVBs). Involved in a late stage of the endosomal pathway targeting transmembrane proteins of the plasma membrane for lysosomal degradation. Plays a critical role in regulation of multiple signal transduction pathways, including the Notch and BMP/decapentaplegic (dpp) signaling pathways, through targeting of membrane bound receptors to multivesicular bodies, isolating them from the cytoplasm and targeting them for lysosomal degradation. Involved in targeting N/Notch for endosomal degradation, negatively regulating the Notch signaling pathway. Regulates Notch signaling in imaginal disk cells and follicle cells during oogenesis and multiple developmental processes, including development of wings, veins, legs, eyes and bristles. Restricts the activity of Notch to the dorsoventral (D/V) boundary of the wing imaginal disk. In external sensory organ development regulates Notch signaling during asymmetric cell division and differentiation of sensory organ precursor cells. May be involved in regulation of apoptosis and cell growth independent of Notch signaling. Involved in targeting tkv for endosomal degradation, negatively regulating the BMP/decapentaplegic (dpp) signaling pathway. Regulates the BMP/dpp signaling pathway in follicle cells during oogenesis, but not in imaginal disk cells during wing development. May be involved in differentiation or morphogenesis of peripodial epithelial cells in the developing imaginal disk. Involved in abscission of germline cells during oogenesis. The polypeptide is Coiled-coil and C2 domain-containing protein 1-like (Drosophila pseudoobscura pseudoobscura (Fruit fly)).